A 583-amino-acid polypeptide reads, in one-letter code: Cysteine/serine-rich nuclear protein 1 (583 aa).

Disordered stretches follow at residues 1 to 79 (MTGL…APRE) and 306 to 381 (AESL…RSGV). Residues 18–41 (SSSSSSSFSSRLSLSSFPASSASP) show a composition bias toward low complexity. Over residues 54–69 (APQSDQDSCGLQSFTP) the composition is skewed to polar residues. The segment covering 335–361 (PVSSELGDSSCSSDMTDSSTTLSSGSS) has biased composition (low complexity). The segment covering 364–373 (PNHPAHPSLP) has biased composition (pro residues).

Belongs to the AXUD1 family. Widely expressed with highest levels in thymus and lung. Low levels detected in naive T-cells.

The protein localises to the nucleus. Binds to the consensus sequence 5'-AGAGTG-3' and has transcriptional activator activity. May have a tumor-suppressor function. May play a role in apoptosis. This chain is Cysteine/serine-rich nuclear protein 1 (Csrnp1), found in Mus musculus (Mouse).